The following is a 91-amino-acid chain: Transcription factor ILI3 (91 aa).

The region spanning 3–58 (SRRGGGGGGGRITDEEINELISKLQALLPESSRSRGASRSSASKLLKETCSYIKSL) is the bHLH domain.

It belongs to the bHLH protein family.

Atypical and probable non DNA-binding bHLH transcription that integrates multiple signaling pathways to regulate cell elongation and plant development. This Oryza sativa subsp. indica (Rice) protein is Transcription factor ILI3 (ILI3).